The following is a 471-amino-acid chain: Glutamate--tRNA ligase (471 aa).

Positions 9 to 19 (PSPTGYLHVGG) match the 'HIGH' region motif. 4 residues coordinate Zn(2+): cysteine 98, cysteine 100, cysteine 125, and histidine 127. The short motif at 237-241 (KLSKR) is the 'KMSKS' region element. Residue lysine 240 coordinates ATP.

Belongs to the class-I aminoacyl-tRNA synthetase family. Glutamate--tRNA ligase type 1 subfamily. In terms of assembly, monomer. Zn(2+) is required as a cofactor.

The protein localises to the cytoplasm. It carries out the reaction tRNA(Glu) + L-glutamate + ATP = L-glutamyl-tRNA(Glu) + AMP + diphosphate. Catalyzes the attachment of glutamate to tRNA(Glu) in a two-step reaction: glutamate is first activated by ATP to form Glu-AMP and then transferred to the acceptor end of tRNA(Glu). The sequence is that of Glutamate--tRNA ligase from Salmonella choleraesuis (strain SC-B67).